The chain runs to 141 residues: MKDEQMLTEWPSHLPWLNQSQNDFTFPSDTYLLLYFWSMSCPNCHQLTDKVLQDIKDMNVKVIGVHVPYIEEEKSMEVVLTYALDRGLAIPIVLDQNYEIVTTCHVQGIPSFCLLSQYGQIITKTMGDVGWDKMLKKIAGL.

In terms of domain architecture, Thioredoxin spans 2–141 (KDEQMLTEWP…DKMLKKIAGL (140 aa)). Residues C41 and C44 are joined by a disulfide bond.

In terms of biological role, required for production of the bacteriocin SkfA. The protein is Thioredoxin-like protein SkfH of Bacillus subtilis (strain 168).